A 488-amino-acid chain; its full sequence is GTPase Der (488 aa).

EngA-type G domains are found at residues 3–166 (PVVA…AEAM) and 199–372 (IKLA…DSAT). Residues 9–16 (GRPNVGKS), 56–60 (DTGGI), 118–121 (NKVD), 205–212 (GKPNVGKS), 252–256 (DTAGV), and 317–320 (NKWD) each bind GTP. Residues 373-457 (RRVSTSMLTR…PIQLRFQEGD (85 aa)) enclose the KH-like domain. A disordered region spans residues 460-488 (FENKTEKLTMSQERRRKRAQSHIKDRKTK). Over residues 473 to 488 (RRRKRAQSHIKDRKTK) the composition is skewed to basic residues.

This sequence belongs to the TRAFAC class TrmE-Era-EngA-EngB-Septin-like GTPase superfamily. EngA (Der) GTPase family. In terms of assembly, associates with the 50S ribosomal subunit.

Functionally, GTPase that plays an essential role in the late steps of ribosome biogenesis. The chain is GTPase Der from Shewanella baltica (strain OS155 / ATCC BAA-1091).